The following is a 209-amino-acid chain: Large ribosomal subunit protein bL25 (209 aa).

A disordered region spans residues 188 to 209; sequence STSMEKEGEGSQEPTAAPSSEN. Residues 199–209 are compositionally biased toward polar residues; the sequence is QEPTAAPSSEN.

The protein belongs to the bacterial ribosomal protein bL25 family. CTC subfamily. Part of the 50S ribosomal subunit; part of the 5S rRNA/L5/L18/L25 subcomplex. Contacts the 5S rRNA. Binds to the 5S rRNA independently of L5 and L18.

This is one of the proteins that binds to the 5S RNA in the ribosome where it forms part of the central protuberance. This Ehrlichia canis (strain Jake) protein is Large ribosomal subunit protein bL25.